A 231-amino-acid polypeptide reads, in one-letter code: Small ribosomal subunit protein bS18c (231 aa).

Disordered regions lie at residues 1 to 31 and 95 to 231; these read MEKSERPLIKKKRPFRKKKRSFRKRRSPIES and QKEE…TRKK. Residues 9 to 26 are compositionally biased toward basic residues; the sequence is IKKKRPFRKKKRSFRKRR. Composition is skewed to basic and acidic residues over residues 95 to 151, 159 to 169, and 212 to 231; these read QKEE…EFQR, TNEKQTNEKQT, and TNEKQTKSNDRTTDLRTRKK.

The protein belongs to the bacterial ribosomal protein bS18 family. Part of the 30S ribosomal subunit.

It is found in the plastid. It localises to the chloroplast. In Jasminum nudiflorum (Winter jasmine), this protein is Small ribosomal subunit protein bS18c.